We begin with the raw amino-acid sequence, 158 residues long: Urease accessory protein UreE (158 aa).

Residues 133 to 158 are disordered; it reads PEGGAYQAHSHDGHSHHQGHTHDHHD. The span at 141 to 158 shows a compositional bias: basic and acidic residues; the sequence is HSHDGHSHHQGHTHDHHD.

It belongs to the UreE family.

It localises to the cytoplasm. Involved in urease metallocenter assembly. Binds nickel. Probably functions as a nickel donor during metallocenter assembly. The sequence is that of Urease accessory protein UreE from Chelativorans sp. (strain BNC1).